We begin with the raw amino-acid sequence, 288 residues long: Mycothiol S-conjugate amidase (288 aa).

3 residues coordinate Zn(2+): His-12, Asp-15, and His-142.

The protein belongs to the MshB deacetylase family. Mca subfamily. Monomer. Zn(2+) serves as cofactor.

It catalyses the reaction mycothiol S-conjugate + H2O = an N-acetyl-L-cysteine-S-conjugate + 1D-myo-inositol 2-amino-2-deoxy-alpha-D-glucopyranoside. With respect to regulation, partially inhibited by MSH when MSmB is used as substrate. Competitively inhibited by the GlcNAc-cyclohexyl derivative 5-(4-chlorophenyl)-N-((2R,3R,4R,5S,6R)-2-(cyclohexylthio)-tetrahydro-4,5-dihydroxy-6-(hydroxymethyl)-2H-pyran-3-yl)furan-2-carboxamide, which also inhibits MshB. A mycothiol (MSH, N-acetyl-cysteinyl-glucosaminyl-inositol) S-conjugate amidase, it recycles conjugated MSH to the N-acetyl cysteine conjugate and the MSH precursor. Involved in MSH-dependent detoxification of a number of alkylating agents and antibiotics. Activity is specific for the mycothiol moiety. Has a low but measurable deacetylation activity on GlcNAc-Ins (N-acetyl-glucosaminyl-inositol), and thus can also directly contribute to the production of MSH. This Mycobacterium tuberculosis (strain ATCC 25618 / H37Rv) protein is Mycothiol S-conjugate amidase.